Reading from the N-terminus, the 417-residue chain is Serine hydroxymethyltransferase (417 aa).

(6S)-5,6,7,8-tetrahydrofolate-binding positions include Leu112 and 116–118; that span reads GHL. Lys221 carries the post-translational modification N6-(pyridoxal phosphate)lysine. Glu247 contacts (6S)-5,6,7,8-tetrahydrofolate.

It belongs to the SHMT family. Homodimer. Pyridoxal 5'-phosphate is required as a cofactor.

It localises to the cytoplasm. It catalyses the reaction (6R)-5,10-methylene-5,6,7,8-tetrahydrofolate + glycine + H2O = (6S)-5,6,7,8-tetrahydrofolate + L-serine. Its pathway is one-carbon metabolism; tetrahydrofolate interconversion. It participates in amino-acid biosynthesis; glycine biosynthesis; glycine from L-serine: step 1/1. In terms of biological role, catalyzes the reversible interconversion of serine and glycine with tetrahydrofolate (THF) serving as the one-carbon carrier. This reaction serves as the major source of one-carbon groups required for the biosynthesis of purines, thymidylate, methionine, and other important biomolecules. Also exhibits THF-independent aldolase activity toward beta-hydroxyamino acids, producing glycine and aldehydes, via a retro-aldol mechanism. The polypeptide is Serine hydroxymethyltransferase (Borreliella burgdorferi (strain ATCC 35210 / DSM 4680 / CIP 102532 / B31) (Borrelia burgdorferi)).